The following is an 88-amino-acid chain: MAELNLKGNRRVLTGVVVSDKADKTIVVRCETLVKHSLYKKYIRRHTKFMAHDPSNECGIGDKVQIVEFRPLSRRKRWHLDKILEKAV.

It belongs to the universal ribosomal protein uS17 family. Part of the 30S ribosomal subunit.

In terms of biological role, one of the primary rRNA binding proteins, it binds specifically to the 5'-end of 16S ribosomal RNA. The chain is Small ribosomal subunit protein uS17 from Maridesulfovibrio salexigens (strain ATCC 14822 / DSM 2638 / NCIMB 8403 / VKM B-1763) (Desulfovibrio salexigens).